We begin with the raw amino-acid sequence, 154 residues long: 6,7-dimethyl-8-ribityllumazine synthase (154 aa).

5-amino-6-(D-ribitylamino)uracil contacts are provided by residues F22, 57-59 (AYE), and 81-83 (AVI). Residue 86–87 (GT) participates in (2S)-2-hydroxy-3-oxobutyl phosphate binding. H89 acts as the Proton donor in catalysis. F114 is a binding site for 5-amino-6-(D-ribitylamino)uracil. R128 serves as a coordination point for (2S)-2-hydroxy-3-oxobutyl phosphate.

Belongs to the DMRL synthase family. In terms of assembly, forms an icosahedral capsid composed of 60 subunits, arranged as a dodecamer of pentamers.

The enzyme catalyses (2S)-2-hydroxy-3-oxobutyl phosphate + 5-amino-6-(D-ribitylamino)uracil = 6,7-dimethyl-8-(1-D-ribityl)lumazine + phosphate + 2 H2O + H(+). The protein operates within cofactor biosynthesis; riboflavin biosynthesis; riboflavin from 2-hydroxy-3-oxobutyl phosphate and 5-amino-6-(D-ribitylamino)uracil: step 1/2. In terms of biological role, catalyzes the formation of 6,7-dimethyl-8-ribityllumazine by condensation of 5-amino-6-(D-ribitylamino)uracil with 3,4-dihydroxy-2-butanone 4-phosphate. This is the penultimate step in the biosynthesis of riboflavin. The chain is 6,7-dimethyl-8-ribityllumazine synthase from Idiomarina loihiensis (strain ATCC BAA-735 / DSM 15497 / L2-TR).